A 481-amino-acid chain; its full sequence is ATP synthase subunit beta (481 aa).

160–167 (GGAGVGKT) provides a ligand contact to ATP.

This sequence belongs to the ATPase alpha/beta chains family. As to quaternary structure, F-type ATPases have 2 components, CF(1) - the catalytic core - and CF(0) - the membrane proton channel. CF(1) has five subunits: alpha(3), beta(3), gamma(1), delta(1), epsilon(1). CF(0) has three main subunits: a(1), b(2) and c(9-12). The alpha and beta chains form an alternating ring which encloses part of the gamma chain. CF(1) is attached to CF(0) by a central stalk formed by the gamma and epsilon chains, while a peripheral stalk is formed by the delta and b chains.

The protein localises to the cell inner membrane. It carries out the reaction ATP + H2O + 4 H(+)(in) = ADP + phosphate + 5 H(+)(out). Produces ATP from ADP in the presence of a proton gradient across the membrane. The catalytic sites are hosted primarily by the beta subunits. The protein is ATP synthase subunit beta of Myxococcus xanthus (strain DK1622).